Reading from the N-terminus, the 520-residue chain is Bifunctional purine biosynthesis protein PurH (520 aa).

In terms of domain architecture, MGS-like spans 1-147; the sequence is MAKIGRALIS…KNNRDVTVVV (147 aa).

This sequence belongs to the PurH family.

It carries out the reaction (6R)-10-formyltetrahydrofolate + 5-amino-1-(5-phospho-beta-D-ribosyl)imidazole-4-carboxamide = 5-formamido-1-(5-phospho-D-ribosyl)imidazole-4-carboxamide + (6S)-5,6,7,8-tetrahydrofolate. The catalysed reaction is IMP + H2O = 5-formamido-1-(5-phospho-D-ribosyl)imidazole-4-carboxamide. It functions in the pathway purine metabolism; IMP biosynthesis via de novo pathway; 5-formamido-1-(5-phospho-D-ribosyl)imidazole-4-carboxamide from 5-amino-1-(5-phospho-D-ribosyl)imidazole-4-carboxamide (10-formyl THF route): step 1/1. It participates in purine metabolism; IMP biosynthesis via de novo pathway; IMP from 5-formamido-1-(5-phospho-D-ribosyl)imidazole-4-carboxamide: step 1/1. This Citrifermentans bemidjiense (strain ATCC BAA-1014 / DSM 16622 / JCM 12645 / Bem) (Geobacter bemidjiensis) protein is Bifunctional purine biosynthesis protein PurH.